The following is a 200-amino-acid chain: dITP/XTP pyrophosphatase (200 aa).

8 to 13 contacts substrate; that stretch reads TRNAGK. Catalysis depends on Asp72, which acts as the Proton acceptor. Residue Asp72 coordinates Mg(2+). Substrate is bound by residues Ser73, 155-158, Lys178, and 183-184; these read FGYD and HR.

This sequence belongs to the HAM1 NTPase family. In terms of assembly, homodimer. Requires Mg(2+) as cofactor.

The catalysed reaction is XTP + H2O = XMP + diphosphate + H(+). The enzyme catalyses dITP + H2O = dIMP + diphosphate + H(+). It carries out the reaction ITP + H2O = IMP + diphosphate + H(+). Pyrophosphatase that catalyzes the hydrolysis of nucleoside triphosphates to their monophosphate derivatives, with a high preference for the non-canonical purine nucleotides XTP (xanthosine triphosphate), dITP (deoxyinosine triphosphate) and ITP. Seems to function as a house-cleaning enzyme that removes non-canonical purine nucleotides from the nucleotide pool, thus preventing their incorporation into DNA/RNA and avoiding chromosomal lesions. The polypeptide is dITP/XTP pyrophosphatase (Streptomyces avermitilis (strain ATCC 31267 / DSM 46492 / JCM 5070 / NBRC 14893 / NCIMB 12804 / NRRL 8165 / MA-4680)).